The sequence spans 227 residues: MAYPFQLGLQDATSPIMEELLHFHDHTLMIVFLISSLVLYIISLMLTTKLTHTSTMDAQEVETVWTILPAIILVLIALPSLRILYMMDEINNPSLTVKTMGHQWYWSYEYTDYEDLNFDSYMIPTQELKPGELRLLEVDNRVVLPMEMTVRMLISSEDVLHSWAVPSLGLKTDAIPGRLNQTTLMAMRPGLYYGQCSEICGSNHSFMPIVLEMVPLSYFETWSALMV.

At 1–14 (MAYPFQLGLQDATS) the chain is on the mitochondrial intermembrane side. Residues 15–45 (PIMEELLHFHDHTLMIVFLISSLVLYIISLM) traverse the membrane as a helical segment. Over 46-59 (LTTKLTHTSTMDAQ) the chain is Mitochondrial matrix. Residues 60–87 (EVETVWTILPAIILVLIALPSLRILYMM) form a helical membrane-spanning segment. At 88 to 227 (DEINNPSLTV…YFETWSALMV (140 aa)) the chain is on the mitochondrial intermembrane side. Cu cation contacts are provided by H161, C196, E198, C200, H204, and M207. A Mg(2+)-binding site is contributed by E198. A Phosphotyrosine modification is found at Y218.

Belongs to the cytochrome c oxidase subunit 2 family. Component of the cytochrome c oxidase (complex IV, CIV), a multisubunit enzyme composed of 14 subunits. The complex is composed of a catalytic core of 3 subunits MT-CO1, MT-CO2 and MT-CO3, encoded in the mitochondrial DNA, and 11 supernumerary subunits COX4I, COX5A, COX5B, COX6A, COX6B, COX6C, COX7A, COX7B, COX7C, COX8 and NDUFA4, which are encoded in the nuclear genome. The complex exists as a monomer or a dimer and forms supercomplexes (SCs) in the inner mitochondrial membrane with NADH-ubiquinone oxidoreductase (complex I, CI) and ubiquinol-cytochrome c oxidoreductase (cytochrome b-c1 complex, complex III, CIII), resulting in different assemblies (supercomplex SCI(1)III(2)IV(1) and megacomplex MCI(2)III(2)IV(2)). Found in a complex with TMEM177, COA6, COX18, COX20, SCO1 and SCO2. Interacts with TMEM177 in a COX20-dependent manner. Interacts with COX20. Interacts with COX16. Requires Cu cation as cofactor.

It is found in the mitochondrion inner membrane. The enzyme catalyses 4 Fe(II)-[cytochrome c] + O2 + 8 H(+)(in) = 4 Fe(III)-[cytochrome c] + 2 H2O + 4 H(+)(out). Functionally, component of the cytochrome c oxidase, the last enzyme in the mitochondrial electron transport chain which drives oxidative phosphorylation. The respiratory chain contains 3 multisubunit complexes succinate dehydrogenase (complex II, CII), ubiquinol-cytochrome c oxidoreductase (cytochrome b-c1 complex, complex III, CIII) and cytochrome c oxidase (complex IV, CIV), that cooperate to transfer electrons derived from NADH and succinate to molecular oxygen, creating an electrochemical gradient over the inner membrane that drives transmembrane transport and the ATP synthase. Cytochrome c oxidase is the component of the respiratory chain that catalyzes the reduction of oxygen to water. Electrons originating from reduced cytochrome c in the intermembrane space (IMS) are transferred via the dinuclear copper A center (CU(A)) of subunit 2 and heme A of subunit 1 to the active site in subunit 1, a binuclear center (BNC) formed by heme A3 and copper B (CU(B)). The BNC reduces molecular oxygen to 2 water molecules using 4 electrons from cytochrome c in the IMS and 4 protons from the mitochondrial matrix. The sequence is that of Cytochrome c oxidase subunit 2 (MT-CO2) from Cerdocyon thous (Crab-eating fox).